The chain runs to 386 residues: tRNA-specific adenosine deaminase subunit tad2 (386 aa).

In terms of domain architecture, CMP/dCMP-type deaminase spans 212-322 (TQHETYMKLA…GNDRFGGCGS (111 aa)). Histidine 263 is a binding site for Zn(2+). Residue glutamate 265 is the Proton donor of the active site. Residues cysteine 293 and cysteine 296 each coordinate Zn(2+).

The protein belongs to the cytidine and deoxycytidylate deaminase family. ADAT2 subfamily. As to quaternary structure, heterodimer with Tad3. Zn(2+) serves as cofactor.

It catalyses the reaction adenosine(34) in tRNA + H2O + H(+) = inosine(34) in tRNA + NH4(+). Functionally, structural subunit of tRNA-specific adenosine deaminase, which deaminates adenosine-34 (the first, also called wobble position of the anticodon) to inosine in many tRNAs. Inosine-34 allows the decoding of 3 different nucleotides at the third position of mRNA codons, as inosine is able to pair with U, C, and A. The wobble inosine tRNA modification is essential for cell cycle progression in the G1/S and G2/M transitions in fission yeast. The polypeptide is tRNA-specific adenosine deaminase subunit tad2 (tad2) (Schizosaccharomyces pombe (strain 972 / ATCC 24843) (Fission yeast)).